A 221-amino-acid polypeptide reads, in one-letter code: Small ribosomal subunit protein uS3c (221 aa).

The KH type-2 domain maps to 39 to 109; that stretch reads LRDYLKTRLA…RVIVHVVEIA (71 aa).

This sequence belongs to the universal ribosomal protein uS3 family. As to quaternary structure, part of the 30S ribosomal subunit.

It localises to the plastid. The protein localises to the chloroplast. The protein is Small ribosomal subunit protein uS3c (rps3) of Nephroselmis olivacea (Green alga).